Reading from the N-terminus, the 150-residue chain is Phosphopantetheine adenylyltransferase (150 aa).

Residue T9 coordinates substrate. ATP-binding positions include 9–10 and H17; that span reads TF. Substrate-binding residues include K41, T73, and R87. Residues 88-90, E98, and 122-128 contribute to the ATP site; these read GIR and LTCVSST.

It belongs to the bacterial CoaD family. Homohexamer. The cofactor is Mg(2+).

The protein localises to the cytoplasm. The catalysed reaction is (R)-4'-phosphopantetheine + ATP + H(+) = 3'-dephospho-CoA + diphosphate. The protein operates within cofactor biosynthesis; coenzyme A biosynthesis; CoA from (R)-pantothenate: step 4/5. Reversibly transfers an adenylyl group from ATP to 4'-phosphopantetheine, yielding dephospho-CoA (dPCoA) and pyrophosphate. The chain is Phosphopantetheine adenylyltransferase from Bacteroides fragilis (strain ATCC 25285 / DSM 2151 / CCUG 4856 / JCM 11019 / LMG 10263 / NCTC 9343 / Onslow / VPI 2553 / EN-2).